The primary structure comprises 533 residues: Glucose-6-phosphate isomerase (533 aa).

Glu-341 (proton donor) is an active-site residue. Active-site residues include His-372 and Lys-501.

It belongs to the GPI family.

The protein localises to the cytoplasm. It carries out the reaction alpha-D-glucose 6-phosphate = beta-D-fructose 6-phosphate. The protein operates within carbohydrate biosynthesis; gluconeogenesis. It functions in the pathway carbohydrate degradation; glycolysis; D-glyceraldehyde 3-phosphate and glycerone phosphate from D-glucose: step 2/4. Catalyzes the reversible isomerization of glucose-6-phosphate to fructose-6-phosphate. The protein is Glucose-6-phosphate isomerase of Cereibacter sphaeroides (strain ATCC 17025 / ATH 2.4.3) (Rhodobacter sphaeroides).